The primary structure comprises 93 residues: Small ribosomal subunit protein uS19 (93 aa).

It belongs to the universal ribosomal protein uS19 family.

In terms of biological role, protein S19 forms a complex with S13 that binds strongly to the 16S ribosomal RNA. The chain is Small ribosomal subunit protein uS19 from Geobacter sulfurreducens (strain ATCC 51573 / DSM 12127 / PCA).